We begin with the raw amino-acid sequence, 362 residues long: Phosphoserine aminotransferase (362 aa).

Arginine 42 is an L-glutamate binding site. Pyridoxal 5'-phosphate is bound by residues 76–77, tryptophan 102, threonine 152, aspartate 173, and glutamine 196; that span reads AS. The residue at position 197 (lysine 197) is an N6-(pyridoxal phosphate)lysine. 238–239 is a binding site for pyridoxal 5'-phosphate; sequence NT.

The protein belongs to the class-V pyridoxal-phosphate-dependent aminotransferase family. SerC subfamily. As to quaternary structure, homodimer. Pyridoxal 5'-phosphate is required as a cofactor.

It is found in the cytoplasm. It carries out the reaction O-phospho-L-serine + 2-oxoglutarate = 3-phosphooxypyruvate + L-glutamate. It catalyses the reaction 4-(phosphooxy)-L-threonine + 2-oxoglutarate = (R)-3-hydroxy-2-oxo-4-phosphooxybutanoate + L-glutamate. The protein operates within amino-acid biosynthesis; L-serine biosynthesis; L-serine from 3-phospho-D-glycerate: step 2/3. It functions in the pathway cofactor biosynthesis; pyridoxine 5'-phosphate biosynthesis; pyridoxine 5'-phosphate from D-erythrose 4-phosphate: step 3/5. Catalyzes the reversible conversion of 3-phosphohydroxypyruvate to phosphoserine and of 3-hydroxy-2-oxo-4-phosphonooxybutanoate to phosphohydroxythreonine. The chain is Phosphoserine aminotransferase from Chromobacterium violaceum (strain ATCC 12472 / DSM 30191 / JCM 1249 / CCUG 213 / NBRC 12614 / NCIMB 9131 / NCTC 9757 / MK).